A 428-amino-acid chain; its full sequence is AP-1 complex subunit mu (428 aa).

The residue at position 2 (A2) is an N-acetylalanine; partial. In terms of domain architecture, MHD spans 169–426 (KNEVFLDVVE…VCLSGDYQFR (258 aa)).

This sequence belongs to the adaptor complexes medium subunit family. As to quaternary structure, adaptor protein complex 1 (AP-1) is a heterotetramer composed of two large adaptins (gamma-type subunit and beta-type subunit), a medium adaptin (mu-type subunit) and a small adaptin (sigma-type subunit).

The protein resides in the golgi apparatus. Its subcellular location is the trans-Golgi network. It localises to the cytoplasmic vesicle. It is found in the clathrin-coated vesicle membrane. In terms of biological role, subunit of clathrin-associated adaptor protein complex 1 that plays a role in protein sorting in the trans-Golgi network (TGN) and endosomes. The AP complexes mediate the recruitment of clathrin to membranes and the recognition of sorting signals within the cytosolic tails of transmembrane cargo molecules. Also involved in early steps of phagocytosis and macropinocytosis. This is AP-1 complex subunit mu (apm1) from Dictyostelium discoideum (Social amoeba).